A 295-amino-acid chain; its full sequence is Acetylglutamate kinase (295 aa).

Substrate-binding positions include 70-71 (GG), R92, and N191.

This sequence belongs to the acetylglutamate kinase family. ArgB subfamily.

Its subcellular location is the cytoplasm. The enzyme catalyses N-acetyl-L-glutamate + ATP = N-acetyl-L-glutamyl 5-phosphate + ADP. It functions in the pathway amino-acid biosynthesis; L-arginine biosynthesis; N(2)-acetyl-L-ornithine from L-glutamate: step 2/4. Functionally, catalyzes the ATP-dependent phosphorylation of N-acetyl-L-glutamate. This Mycolicibacterium paratuberculosis (strain ATCC BAA-968 / K-10) (Mycobacterium paratuberculosis) protein is Acetylglutamate kinase.